Reading from the N-terminus, the 172-residue chain is GTP-dependent dephospho-CoA kinase (172 aa).

Residues D40, V41, V42, D59, and E112 each contribute to the GTP site.

Belongs to the GTP-dependent DPCK family.

It catalyses the reaction 3'-dephospho-CoA + GTP = GDP + CoA + H(+). Its pathway is cofactor biosynthesis; coenzyme A biosynthesis. Its function is as follows. Catalyzes the GTP-dependent phosphorylation of the 3'-hydroxyl group of dephosphocoenzyme A to form coenzyme A (CoA). This is GTP-dependent dephospho-CoA kinase from Methanospirillum hungatei JF-1 (strain ATCC 27890 / DSM 864 / NBRC 100397 / JF-1).